Reading from the N-terminus, the 425-residue chain is GTPase Obg (425 aa).

Residues 1–158 (MFVDQVKVYV…RYIVMELKLI (158 aa)) form the Obg domain. The interval 118 to 144 (KGGRGGRGNNRFANSSNPAPHISENGE) is disordered. In terms of domain architecture, OBG-type G spans 159 to 327 (ADVGLVGYPS…LMYAIGDTLA (169 aa)). ATP-binding positions include 165–172 (GYPSVGKS), 190–194 (FTTLT), 211–214 (DLPG), 281–284 (NKME), and 308–310 (SAA). Positions 172 and 192 each coordinate Mg(2+). The 78-residue stretch at 348–425 (RAEKEPDAFE…IGKLEFDFVE (78 aa)) folds into the OCT domain.

The protein belongs to the TRAFAC class OBG-HflX-like GTPase superfamily. OBG GTPase family. As to quaternary structure, monomer. Requires Mg(2+) as cofactor.

It is found in the cytoplasm. An essential GTPase which binds GTP, GDP and possibly (p)ppGpp with moderate affinity, with high nucleotide exchange rates and a fairly low GTP hydrolysis rate. Plays a role in control of the cell cycle, stress response, ribosome biogenesis and in those bacteria that undergo differentiation, in morphogenesis control. In Brevibacillus brevis (strain 47 / JCM 6285 / NBRC 100599), this protein is GTPase Obg.